We begin with the raw amino-acid sequence, 226 residues long: Phosphoribosylformylglycinamidine synthase subunit PurQ (226 aa).

One can recognise a Glutamine amidotransferase type-1 domain in the interval 2-226 (KFAVIQFPGS…LKNFLVTVKN (225 aa)). Catalysis depends on cysteine 86, which acts as the Nucleophile. Residues histidine 195 and glutamate 197 contribute to the active site.

Part of the FGAM synthase complex composed of 1 PurL, 1 PurQ and 2 PurS subunits.

It is found in the cytoplasm. The enzyme catalyses N(2)-formyl-N(1)-(5-phospho-beta-D-ribosyl)glycinamide + L-glutamine + ATP + H2O = 2-formamido-N(1)-(5-O-phospho-beta-D-ribosyl)acetamidine + L-glutamate + ADP + phosphate + H(+). The catalysed reaction is L-glutamine + H2O = L-glutamate + NH4(+). The protein operates within purine metabolism; IMP biosynthesis via de novo pathway; 5-amino-1-(5-phospho-D-ribosyl)imidazole from N(2)-formyl-N(1)-(5-phospho-D-ribosyl)glycinamide: step 1/2. Functionally, part of the phosphoribosylformylglycinamidine synthase complex involved in the purines biosynthetic pathway. Catalyzes the ATP-dependent conversion of formylglycinamide ribonucleotide (FGAR) and glutamine to yield formylglycinamidine ribonucleotide (FGAM) and glutamate. The FGAM synthase complex is composed of three subunits. PurQ produces an ammonia molecule by converting glutamine to glutamate. PurL transfers the ammonia molecule to FGAR to form FGAM in an ATP-dependent manner. PurS interacts with PurQ and PurL and is thought to assist in the transfer of the ammonia molecule from PurQ to PurL. In Lactococcus lactis subsp. cremoris (Streptococcus cremoris), this protein is Phosphoribosylformylglycinamidine synthase subunit PurQ.